The primary structure comprises 405 residues: Intraflagellar transport protein 57 homolog (405 aa).

Positions 252 to 380 (ETLKTNILEN…AQLNLEVALL (129 aa)) form a coiled coil.

Belongs to the IFT57 family.

It is found in the cytoplasm. The protein localises to the cytoskeleton. The protein resides in the cilium basal body. Required for the formation of cilia. The sequence is that of Intraflagellar transport protein 57 homolog from Drosophila melanogaster (Fruit fly).